We begin with the raw amino-acid sequence, 109 residues long: Thiosulfate sulfurtransferase GlpE (109 aa).

In terms of domain architecture, Rhodanese spans 17-105 (HQQTAVLVDI…WHRHFPAEVA (89 aa)). Catalysis depends on C65, which acts as the Cysteine persulfide intermediate.

Belongs to the GlpE family.

It is found in the cytoplasm. The enzyme catalyses thiosulfate + hydrogen cyanide = thiocyanate + sulfite + 2 H(+). The catalysed reaction is thiosulfate + [thioredoxin]-dithiol = [thioredoxin]-disulfide + hydrogen sulfide + sulfite + 2 H(+). In terms of biological role, transferase that catalyzes the transfer of sulfur from thiosulfate to thiophilic acceptors such as cyanide or dithiols. May function in a CysM-independent thiosulfate assimilation pathway by catalyzing the conversion of thiosulfate to sulfite, which can then be used for L-cysteine biosynthesis. The polypeptide is Thiosulfate sulfurtransferase GlpE (Klebsiella pneumoniae (strain 342)).